The following is a 574-amino-acid chain: Proline--tRNA ligase (574 aa).

Belongs to the class-II aminoacyl-tRNA synthetase family. ProS type 1 subfamily. As to quaternary structure, homodimer.

The protein resides in the cytoplasm. It catalyses the reaction tRNA(Pro) + L-proline + ATP = L-prolyl-tRNA(Pro) + AMP + diphosphate. Catalyzes the attachment of proline to tRNA(Pro) in a two-step reaction: proline is first activated by ATP to form Pro-AMP and then transferred to the acceptor end of tRNA(Pro). As ProRS can inadvertently accommodate and process non-cognate amino acids such as alanine and cysteine, to avoid such errors it has two additional distinct editing activities against alanine. One activity is designated as 'pretransfer' editing and involves the tRNA(Pro)-independent hydrolysis of activated Ala-AMP. The other activity is designated 'posttransfer' editing and involves deacylation of mischarged Ala-tRNA(Pro). The misacylated Cys-tRNA(Pro) is not edited by ProRS. The chain is Proline--tRNA ligase from Sodalis glossinidius (strain morsitans).